The following is a 434-amino-acid chain: ATP-dependent protease ATPase subunit HslU (434 aa).

Residues Val18, 60-65 (GVGKTE), Asp247, Glu312, and Arg384 each bind ATP.

Belongs to the ClpX chaperone family. HslU subfamily. As to quaternary structure, a double ring-shaped homohexamer of HslV is capped on each side by a ring-shaped HslU homohexamer. The assembly of the HslU/HslV complex is dependent on binding of ATP.

It localises to the cytoplasm. Its function is as follows. ATPase subunit of a proteasome-like degradation complex; this subunit has chaperone activity. The binding of ATP and its subsequent hydrolysis by HslU are essential for unfolding of protein substrates subsequently hydrolyzed by HslV. HslU recognizes the N-terminal part of its protein substrates and unfolds these before they are guided to HslV for hydrolysis. In Rhodopseudomonas palustris (strain BisB18), this protein is ATP-dependent protease ATPase subunit HslU.